Reading from the N-terminus, the 815-residue chain is Ataxin-1 (815 aa).

The span at 1–41 shows a compositional bias: basic and acidic residues; the sequence is MKSNQERSNECLPPKKREIPATSRSSEEKAPTLPSDNHRVE. Residues 1–63 form a disordered region; that stretch reads MKSNQERSNE…GHGGGRHGPA (63 aa). K16 is covalently cross-linked (Glycyl lysine isopeptide (Lys-Gly) (interchain with G-Cter in SUMO)). Over residues 49 to 61 the composition is skewed to gly residues; the sequence is NPGGRGHGGGRHG. Phosphoserine occurs at positions 82 and 88. 3 disordered regions span residues 185–270, 329–355, and 397–424; these read GSLS…PVHL, EKSR…VPHP, and VQQA…PGHR. K194 is covalently cross-linked (Glycyl lysine isopeptide (Lys-Gly) (interchain with G-Cter in SUMO)). Over residues 197–226 the composition is skewed to low complexity; that stretch reads QQQQQQQQQQQQHQHQQQQQQQQQQQQQQH. Phosphoserine is present on residues S238 and S253. The span at 243-260 shows a compositional bias: polar residues; that stretch reads QQNQYVHISSSPQNTGRT. The interval 494–604 is self-association; the sequence is VGSTDMEASG…TEDFIQSAEI (111 aa). The interval 538-815 is interaction with USP7; the sequence is LVTQAAYPAM…CIEGRSNVGK (278 aa). The interval 540–766 is RNA-binding; the sequence is TQAAYPAMVQ…FLTKIEPSKP (227 aa). An AXH domain is found at 562–693; the sequence is SPAAAPPTLP…SLTLKNLKNG (132 aa). Glycyl lysine isopeptide (Lys-Gly) (interchain with G-Cter in SUMO) cross-links involve residues K609, K696, and K745. The disordered stretch occupies residues 762–798; sequence EPSKPAATRKRRWSAPESRKLEKSEDEPPLTLPKPSL. S775 is modified (phosphoserine). A Nuclear localization signal motif is present at residues 794-797; the sequence is PKPS.

This sequence belongs to the ATXN1 family. In terms of assembly, homooligomer. Interacts with CIC. Interacts with ANP32A, PQBP1, UBQLN4, ATXN1L and USP7. Directly interacts with RBPJ; this interaction is disrupted in the presence of Notch intracellular domain. Competes with ATXN1L for RBPJ-binding. Found in a complex with CIC and ATXN1L. Post-translationally, ubiquitinated by UBE3A, leading to its degradation by the proteasome. The presence of expanded poly-Gln repeats in spinocerebellar ataxia 1 (SCA1) patients impairs ubiquitination and degradation, leading to accumulation of ATXN1 in neurons and subsequent toxicity. In terms of processing, phosphorylation at Ser-775 increases the pathogenicity of proteins with an expanded polyglutamine tract. Sumoylation is dependent on nuclear localization and phosphorylation at Ser-775. It is reduced in the presence of an expanded polyglutamine tract. Widely expressed throughout the body.

The protein resides in the cytoplasm. It localises to the nucleus. Chromatin-binding factor that repress Notch signaling in the absence of Notch intracellular domain by acting as a CBF1 corepressor. Binds to the HEY promoter and might assist, along with NCOR2, RBPJ-mediated repression. Binds RNA in vitro. May be involved in RNA metabolism. In concert with CIC and ATXN1L, involved in brain development. The polypeptide is Ataxin-1 (ATXN1) (Homo sapiens (Human)).